Consider the following 123-residue polypeptide: Large ribosomal subunit protein uL18 (123 aa).

Belongs to the universal ribosomal protein uL18 family. As to quaternary structure, part of the 50S ribosomal subunit; part of the 5S rRNA/L5/L18/L25 subcomplex. Contacts the 5S and 23S rRNAs.

In terms of biological role, this is one of the proteins that bind and probably mediate the attachment of the 5S RNA into the large ribosomal subunit, where it forms part of the central protuberance. The sequence is that of Large ribosomal subunit protein uL18 from Bifidobacterium animalis subsp. lactis (strain AD011).